The primary structure comprises 320 residues: Aspartate carbamoyltransferase catalytic subunit (320 aa).

Residues Arg-58 and Thr-59 each contribute to the carbamoyl phosphate site. Lys-86 provides a ligand contact to L-aspartate. Carbamoyl phosphate-binding residues include Arg-108, His-136, and Gln-139. L-aspartate is bound by residues Arg-169 and Arg-223. 2 residues coordinate carbamoyl phosphate: Gly-264 and Pro-265.

This sequence belongs to the aspartate/ornithine carbamoyltransferase superfamily. ATCase family. In terms of assembly, heterododecamer (2C3:3R2) of six catalytic PyrB chains organized as two trimers (C3), and six regulatory PyrI chains organized as three dimers (R2).

The catalysed reaction is carbamoyl phosphate + L-aspartate = N-carbamoyl-L-aspartate + phosphate + H(+). The protein operates within pyrimidine metabolism; UMP biosynthesis via de novo pathway; (S)-dihydroorotate from bicarbonate: step 2/3. Catalyzes the condensation of carbamoyl phosphate and aspartate to form carbamoyl aspartate and inorganic phosphate, the committed step in the de novo pyrimidine nucleotide biosynthesis pathway. The chain is Aspartate carbamoyltransferase catalytic subunit from Cereibacter sphaeroides (strain ATCC 17029 / ATH 2.4.9) (Rhodobacter sphaeroides).